A 331-amino-acid chain; its full sequence is Ferredoxin--NADP reductase (331 aa).

FAD is bound by residues Glu34, Gln42, Tyr47, Val87, Phe121, Asp285, and Thr325.

Belongs to the ferredoxin--NADP reductase type 2 family. As to quaternary structure, homodimer. It depends on FAD as a cofactor.

The catalysed reaction is 2 reduced [2Fe-2S]-[ferredoxin] + NADP(+) + H(+) = 2 oxidized [2Fe-2S]-[ferredoxin] + NADPH. The protein is Ferredoxin--NADP reductase of Lactiplantibacillus plantarum (strain ATCC BAA-793 / NCIMB 8826 / WCFS1) (Lactobacillus plantarum).